Consider the following 332-residue polypeptide: Anthranilate phosphoribosyltransferase (332 aa).

5-phospho-alpha-D-ribose 1-diphosphate-binding positions include Gly79, 82–83, Ser87, 89–92, 107–115, and Ser119; these read GD, NIST, and KHGNRSVSS. Gly79 is a binding site for anthranilate. Mg(2+) is bound at residue Ser91. Residue Asn110 coordinates anthranilate. Residue Arg165 participates in anthranilate binding. Mg(2+)-binding residues include Asp223 and Glu224.

The protein belongs to the anthranilate phosphoribosyltransferase family. In terms of assembly, homodimer. Mg(2+) serves as cofactor.

It carries out the reaction N-(5-phospho-beta-D-ribosyl)anthranilate + diphosphate = 5-phospho-alpha-D-ribose 1-diphosphate + anthranilate. It participates in amino-acid biosynthesis; L-tryptophan biosynthesis; L-tryptophan from chorismate: step 2/5. Its function is as follows. Catalyzes the transfer of the phosphoribosyl group of 5-phosphorylribose-1-pyrophosphate (PRPP) to anthranilate to yield N-(5'-phosphoribosyl)-anthranilate (PRA). In Yersinia pestis bv. Antiqua (strain Antiqua), this protein is Anthranilate phosphoribosyltransferase.